Here is a 232-residue protein sequence, read N- to C-terminus: Ras-related protein RabP (232 aa).

GTP is bound at residue 15-22 (GNYGVGKS). The Effector region motif lies at 35 to 40 (DNTTGF). Residues 58 to 62 (DTSGQ) and 118 to 121 (NKFD) contribute to the GTP site. S-geranylgeranyl cysteine attachment occurs at residues C229 and C230.

It belongs to the small GTPase superfamily. Rab family.

It localises to the cell membrane. The polypeptide is Ras-related protein RabP (rabP) (Dictyostelium discoideum (Social amoeba)).